The chain runs to 283 residues: HTH-type transcriptional activator RhaR (283 aa).

The HTH araC/xylS-type domain maps to 179-277; that stretch reads DLLMAALGNS…GVTPRVWRQQ (99 aa). 2 consecutive DNA-binding regions (H-T-H motif) follow at residues 196 to 217 and 244 to 267; these read QHFCSHYQIAERPLRQLFRQQT and ISEIAARCGFEDSNYFSVVFTRET.

As to quaternary structure, binds DNA as a dimer.

The protein localises to the cytoplasm. Its function is as follows. Activates expression of the rhaSR operon in response to L-rhamnose. The sequence is that of HTH-type transcriptional activator RhaR from Cronobacter sakazakii (strain ATCC BAA-894) (Enterobacter sakazakii).